The sequence spans 120 residues: Large ribosomal subunit protein bL12 (120 aa).

This sequence belongs to the bacterial ribosomal protein bL12 family. In terms of assembly, homodimer. Part of the ribosomal stalk of the 50S ribosomal subunit. Forms a multimeric L10(L12)X complex, where L10 forms an elongated spine to which 2 to 4 L12 dimers bind in a sequential fashion. Binds GTP-bound translation factors.

In terms of biological role, forms part of the ribosomal stalk which helps the ribosome interact with GTP-bound translation factors. Is thus essential for accurate translation. The chain is Large ribosomal subunit protein bL12 from Haemophilus ducreyi (strain 35000HP / ATCC 700724).